A 228-amino-acid polypeptide reads, in one-letter code: Urease accessory protein UreF (228 aa).

It belongs to the UreF family. As to quaternary structure, ureD, UreF and UreG form a complex that acts as a GTP-hydrolysis-dependent molecular chaperone, activating the urease apoprotein by helping to assemble the nickel containing metallocenter of UreC. The UreE protein probably delivers the nickel.

It localises to the cytoplasm. In terms of biological role, required for maturation of urease via the functional incorporation of the urease nickel metallocenter. This is Urease accessory protein UreF from Alkalilimnicola ehrlichii (strain ATCC BAA-1101 / DSM 17681 / MLHE-1).